The primary structure comprises 388 residues: Dual-specificity RNA methyltransferase RlmN (388 aa).

Glutamate 109 acts as the Proton acceptor in catalysis. The Radical SAM core domain occupies 115 to 354 (EEDRATLCVS…TIVRKTRGDD (240 aa)). An intrachain disulfide couples cysteine 122 to cysteine 359. 3 residues coordinate [4Fe-4S] cluster: cysteine 129, cysteine 133, and cysteine 136. S-adenosyl-L-methionine-binding positions include 183-184 (GE), serine 215, 237-239 (SLH), and asparagine 316. Cysteine 359 functions as the S-methylcysteine intermediate in the catalytic mechanism.

It belongs to the radical SAM superfamily. RlmN family. [4Fe-4S] cluster serves as cofactor.

Its subcellular location is the cytoplasm. The catalysed reaction is adenosine(2503) in 23S rRNA + 2 reduced [2Fe-2S]-[ferredoxin] + 2 S-adenosyl-L-methionine = 2-methyladenosine(2503) in 23S rRNA + 5'-deoxyadenosine + L-methionine + 2 oxidized [2Fe-2S]-[ferredoxin] + S-adenosyl-L-homocysteine. It catalyses the reaction adenosine(37) in tRNA + 2 reduced [2Fe-2S]-[ferredoxin] + 2 S-adenosyl-L-methionine = 2-methyladenosine(37) in tRNA + 5'-deoxyadenosine + L-methionine + 2 oxidized [2Fe-2S]-[ferredoxin] + S-adenosyl-L-homocysteine. In terms of biological role, specifically methylates position 2 of adenine 2503 in 23S rRNA and position 2 of adenine 37 in tRNAs. m2A2503 modification seems to play a crucial role in the proofreading step occurring at the peptidyl transferase center and thus would serve to optimize ribosomal fidelity. The polypeptide is Dual-specificity RNA methyltransferase RlmN (Klebsiella pneumoniae subsp. pneumoniae (strain ATCC 700721 / MGH 78578)).